The primary structure comprises 355 residues: Probable butyrate kinase (355 aa).

The protein belongs to the acetokinase family.

Its subcellular location is the cytoplasm. The enzyme catalyses butanoate + ATP = butanoyl phosphate + ADP. The protein is Probable butyrate kinase of Listeria monocytogenes serotype 4a (strain HCC23).